The primary structure comprises 223 residues: uncharacterized protein (223 aa).

2 helical membrane passes run 1 to 21 (MLII…TFYL) and 45 to 65 (ILIG…TSLI).

It localises to the cell membrane. This is an uncharacterized protein from Haemophilus influenzae (strain ATCC 51907 / DSM 11121 / KW20 / Rd).